The following is a 199-amino-acid chain: NAD(P)H dehydrogenase (quinone) (199 aa).

Positions 4–190 (MLVLYYSAYG…DGARFQGRRV (187 aa)) constitute a Flavodoxin-like domain. Residues 10–15 (SAYGYM) and 78–80 (TRY) each bind FMN. NAD(+) is bound at residue Y12. W98 serves as a coordination point for substrate. Residues 113–119 (STATQHG) and H134 contribute to the FMN site. The interval 158 to 181 (GAPYGMTTTADGDGSRQPSAQELD) is disordered. The span at 163-177 (MTTTADGDGSRQPSA) shows a compositional bias: polar residues.

It belongs to the WrbA family. It depends on FMN as a cofactor.

It carries out the reaction a quinone + NADH + H(+) = a quinol + NAD(+). The enzyme catalyses a quinone + NADPH + H(+) = a quinol + NADP(+). The polypeptide is NAD(P)H dehydrogenase (quinone) (Brucella abortus (strain S19)).